Reading from the N-terminus, the 183-residue chain is Acireductone dioxygenase (183 aa).

Fe(2+) contacts are provided by His95, His97, Glu101, and His139. Ni(2+) is bound by residues His95, His97, Glu101, and His139.

Belongs to the acireductone dioxygenase (ARD) family. As to quaternary structure, monomer. The cofactor is Fe(2+). Ni(2+) is required as a cofactor.

It catalyses the reaction 1,2-dihydroxy-5-(methylsulfanyl)pent-1-en-3-one + O2 = 3-(methylsulfanyl)propanoate + CO + formate + 2 H(+). The enzyme catalyses 1,2-dihydroxy-5-(methylsulfanyl)pent-1-en-3-one + O2 = 4-methylsulfanyl-2-oxobutanoate + formate + 2 H(+). Its pathway is amino-acid biosynthesis; L-methionine biosynthesis via salvage pathway; L-methionine from S-methyl-5-thio-alpha-D-ribose 1-phosphate: step 5/6. Its function is as follows. Catalyzes 2 different reactions between oxygen and the acireductone 1,2-dihydroxy-3-keto-5-methylthiopentene (DHK-MTPene) depending upon the metal bound in the active site. Fe-containing acireductone dioxygenase (Fe-ARD) produces formate and 2-keto-4-methylthiobutyrate (KMTB), the alpha-ketoacid precursor of methionine in the methionine recycle pathway. Ni-containing acireductone dioxygenase (Ni-ARD) produces methylthiopropionate, carbon monoxide and formate, and does not lie on the methionine recycle pathway. This Hydrogenobaculum sp. (strain Y04AAS1) protein is Acireductone dioxygenase.